A 313-amino-acid polypeptide reads, in one-letter code: MAINLTGRSLLTLLEYTPEEISFLLDLSAQVKRESRARIVHKRFAGKTLAMIFEKRSTRTRMAFETAFAEEGGHPIFLSIQDIQLGAKESIEDTARVLGRMVDAIMFRGYKQETVETLAKYSGVPVYNGLTDVYHPTQVLADLMTTQEVFGKLKGIKLVFMGDGRNNMANSLMIGCAKMGMHYVVCSPAELRPDENLMQTCLTIAKETDSKIEVIDDPEKAVDGADVIYTDVWASMGEESKQQERERLLRPYQVNEVLMRKTGKKDTIFLHCLPAVKGQEVTFDVIEGKQSRVWDEAENRKHTIKALMIATLL.

Carbamoyl phosphate-binding positions include 57 to 60 (STRT), Q84, R108, and 135 to 138 (HPTQ). L-ornithine contacts are provided by residues N167, D231, and 235-236 (SM). Carbamoyl phosphate-binding positions include 272 to 273 (CL) and R300.

The protein belongs to the aspartate/ornithine carbamoyltransferase superfamily. OTCase family.

The protein resides in the cytoplasm. The enzyme catalyses carbamoyl phosphate + L-ornithine = L-citrulline + phosphate + H(+). The protein operates within amino-acid biosynthesis; L-arginine biosynthesis; L-arginine from L-ornithine and carbamoyl phosphate: step 1/3. Functionally, reversibly catalyzes the transfer of the carbamoyl group from carbamoyl phosphate (CP) to the N(epsilon) atom of ornithine (ORN) to produce L-citrulline. In Pseudothermotoga lettingae (strain ATCC BAA-301 / DSM 14385 / NBRC 107922 / TMO) (Thermotoga lettingae), this protein is Ornithine carbamoyltransferase.